A 1071-amino-acid polypeptide reads, in one-letter code: DNA-directed RNA polymerase subunit beta (1071 aa).

Belongs to the RNA polymerase beta chain family. In terms of assembly, in plastids the minimal PEP RNA polymerase catalytic core is composed of four subunits: alpha, beta, beta', and beta''. When a (nuclear-encoded) sigma factor is associated with the core the holoenzyme is formed, which can initiate transcription.

It localises to the plastid. Its subcellular location is the chloroplast. The catalysed reaction is RNA(n) + a ribonucleoside 5'-triphosphate = RNA(n+1) + diphosphate. DNA-dependent RNA polymerase catalyzes the transcription of DNA into RNA using the four ribonucleoside triphosphates as substrates. The polypeptide is DNA-directed RNA polymerase subunit beta (Drimys granadensis).